Here is a 2399-residue protein sequence, read N- to C-terminus: MNTEELELLSDSKYRNYVAAIDKALKNFEYSSEWADLISALGKLNKVLQNNAKYQVVPKKLTIGKRLAQCLHPALPGGVHRKALETYEIIFKIIGPKRLAKDLFLYSSGLFPLLANAAMSVKPALLGLYEMYYLPLGKTLKPGLQGLLTGILPGLEEGSEYYERTNTLLEKVAAAVEQSAFYSALWGSLLTSPAVRLPGITYVLAHLNRKLSMEDQLYIIGSDIELMVEAVSTSVQDSSVLVQRSTLDLILFCFPFHMSQATRPDMIRILSAALHVVLRRDMSLNRRLYAWLLGFDNNGAIIGPRSTRHSNPEEHATYYFTTFSKELLVQAMVGILQVNGFGEESTLMQDLKPFRILISLLDKPELGPVILEDVLIEVFRTLYSQCKAELDLQMEPPFSKDHAQLSSKLRENKKTAELIKTANLLFNSFEPYYMWDYIARWFEECCRQSFFLSRRTLHARLQVGPGDSSDSSELQLTNFCLLVDFLLDIVSLETYIEIQTEHLPQLLLRMISALTSHLQTLRLSELTDSLRLCSKILSKVQPPLLSAGNGGVVQFPSGQNSTVKEWEDKKQVSSVSMENPAEVFEDGENPPSSRSSESGFTEFIQYQADRPDDLDRELNGQGAATIPIGSTSSETETASTVGSEETVIQPPSTFTQGAAGRSGKAVQKTAMQCCLEYVQQFLSRLINLYIIHSDSFPQALAADHQGDFSRIQRETSKWDRDSQGDAKERNIHTPKTSKEYLSAFLAACQLFLECSSFPVYIAEGNHTSESHSEKPDTDCEHAHPPQWLRTLMSACSQARDFRVQSAAVSLVMDLVGLTQSVAMVTGENINSMEPAQPLSPNQGRVAVVIRPPLTQGNLKYIAEKTEFFKHVALTLWDQLGDGTPQHHQKSVELFYQLHNLVPSSSICEDVVSQQLTHKDKKIRMEAHAKFAVLWHLTRDLHINKSSFARSFDRSLFIMLDSLTSLDGSTSSVGQAWLNQVLQRHDIARVLEPLLLLLLHPKTQRVSVQRVQAERYWSKTSCYPGEENDKHFMQNFTCNNVSQVHLIASKGNGEKPLTMDEMENFSLTVNPLSDRLSLLSTSSETIPMVVSDFDLPDQQMEILQSSDSGCSQSSAGDNFSYEVDPENANAHEDSHMAKASSPDDDVQQVVFDLICKVVSGLEAESESVTSELEIESLQTKSSDLDPGKEATKIEDQAPQHSQHVLLSDDSPRFLSVSTEEGCECLANGISRNSSSPCISGTAQTLNDSSVPSETKSRQRSHSSIQFSFKEKLSEKVSEKETIVKESGKQPGAKPKVKLARKKDEDKKKAASEKLKQANVFFSEGLDLENWYSCGEGEISEIESDMGSPGSRKSPNFNIHPLYQHVLLYLQLYDSSRTLYAFSAIKSILKTNPIAFVNAISTTSVNNAYTPQLSLLQNLLARHRISVMGKDFYSHIPVDSNHNFRSSMYIEILISLCLYYMRSHYPTHVKVTTQDLIGNRNMQMMSIEILTLLFTELAKVIESSAKGFPSFISDMLSKCKVQKVILHCLLSSIFSVQKWHSEKTAGKSMVAVEEGFSEDSLINFSEDELDNGSTLQSQLLRVLQRLIVLEHHVMTIPEENEAGFDFVVSDLEHISPHQPMTSLQYLHAQPITCQGMFLCAVIRALHQHCACKMHPQWIGLITSTLPYMGKVLQRVVVSVTLQLCRNLDNLIQQYKYETGLSDSRPLWVASIIPPDMILTLLEGITAIIHYCLLDPTTQYHQLLVNVDQKHLVEARSGILSILHMIMSSVTLLWSILHQADASEKMAVAASASVTTINLGATKVIPAASEEQLLLVELVRSISVMRAETVIQTVKEVLKQPPAIAKDKVRKLCFCRKFSFRTGADRIPVPNIVDSWTSLLVLLKDSIQLSLPAPGQFLILGVLNEFIMKNPSLENKKDQRDLQDVTHKIVDAIGAIAGSSLEQTTWLRRNLEVKPSPKIMVDGTNLESDVEDMLSPAMETSNITPSVYSVHALTLLSEVLAHLLDMVFYSDEKERVIPLLVNIMHYVVPYLRNHSAHNAPSYRACVQLLSSLSGYQYTRRAWKKEAFDLFMDPSFFQMDASCVSHWRAIMDNLMTHDKTTFRDLMTRVAVAQSSSLNLFANRDVELEQRAMLLKRLAFAVLSSESDQYQKYLPDIQERLVESLRLPQVQVFLLMEQELTADEDISRTSGPSAAGLETTYTGGNGFSTSYNSQRWLNLYLSACKFLDLALALPSENLPQFQMYRWAFIPEASDDSGLEVRRQGIHQREFKPYVVRLAKLLRKRAKDEEDFKILEGLEMAKHQKNPEEDCSGRTLGWEPGHLLLTLCTMRNMEQLLPFFNVLSQVFNSKVTSRCGGHSGSPVLYPNSFPNKDMKLENHKAFSSKARQKIEEMIEKDFLEGVIKT.

Disordered stretches follow at residues 556–598 (PSGQ…SSES), 619–660 (NGQG…GAAG), 1105–1124 (SDSG…EVDP), 1166–1188 (SVTS…PGKE), 1234–1263 (SPCI…HSSI), and 1279–1308 (ETIV…KKKA). Low complexity-rich tracts occupy residues 629-647 (GSTS…EETV) and 1105-1116 (SDSGCSQSSAGD). Polar residues-rich tracts occupy residues 1166-1180 (SVTS…QTKS) and 1234-1252 (SPCI…VPSE). A Phosphoserine modification is found at Ser-1261.

The protein belongs to the DOP1 family.

It localises to the golgi apparatus membrane. In terms of biological role, may be involved in protein traffic between late Golgi and early endosomes. The sequence is that of Protein DOP1A (Dop1a) from Mus musculus (Mouse).